A 428-amino-acid chain; its full sequence is Histidine--tRNA ligase (428 aa).

It belongs to the class-II aminoacyl-tRNA synthetase family. In terms of assembly, homodimer.

Its subcellular location is the cytoplasm. It carries out the reaction tRNA(His) + L-histidine + ATP = L-histidyl-tRNA(His) + AMP + diphosphate + H(+). This is Histidine--tRNA ligase from Bordetella pertussis (strain Tohama I / ATCC BAA-589 / NCTC 13251).